The primary structure comprises 75 residues: Large ribosomal subunit protein bL31 (75 aa).

Zn(2+) is bound by residues cysteine 16, cysteine 18, cysteine 37, and cysteine 40.

This sequence belongs to the bacterial ribosomal protein bL31 family. Type A subfamily. As to quaternary structure, part of the 50S ribosomal subunit. Zn(2+) is required as a cofactor.

Functionally, binds the 23S rRNA. This chain is Large ribosomal subunit protein bL31, found in Pseudomonas syringae pv. tomato (strain ATCC BAA-871 / DC3000).